The primary structure comprises 323 residues: Beta-ketoacyl-[acyl-carrier-protein] synthase III (323 aa).

Active-site residues include Cys-112 and His-250. The interval 251 to 255 (QANYR) is ACP-binding. Residue Asn-280 is part of the active site.

Belongs to the thiolase-like superfamily. FabH family. As to quaternary structure, homodimer.

It is found in the cytoplasm. It catalyses the reaction malonyl-[ACP] + acetyl-CoA + H(+) = 3-oxobutanoyl-[ACP] + CO2 + CoA. It functions in the pathway lipid metabolism; fatty acid biosynthesis. Its function is as follows. Catalyzes the condensation reaction of fatty acid synthesis by the addition to an acyl acceptor of two carbons from malonyl-ACP. Catalyzes the first condensation reaction which initiates fatty acid synthesis and may therefore play a role in governing the total rate of fatty acid production. Possesses both acetoacetyl-ACP synthase and acetyl transacylase activities. Its substrate specificity determines the biosynthesis of branched-chain and/or straight-chain of fatty acids. The protein is Beta-ketoacyl-[acyl-carrier-protein] synthase III of Clostridium beijerinckii (strain ATCC 51743 / NCIMB 8052) (Clostridium acetobutylicum).